The chain runs to 198 residues: NAD(P)H dehydrogenase (quinone) (198 aa).

The 187-residue stretch at isoleucine 4–valine 190 folds into the Flavodoxin-like domain. FMN contacts are provided by residues serine 10–isoleucine 15 and threonine 79–phenylalanine 81. Tyrosine 12 is an NAD(+) binding site. Tryptophan 99 serves as a coordination point for substrate. Residues serine 114 to glycine 119 and histidine 134 contribute to the FMN site.

It belongs to the WrbA family. FMN is required as a cofactor.

It carries out the reaction a quinone + NADH + H(+) = a quinol + NAD(+). The enzyme catalyses a quinone + NADPH + H(+) = a quinol + NADP(+). This is NAD(P)H dehydrogenase (quinone) from Azotobacter vinelandii (strain DJ / ATCC BAA-1303).